The primary structure comprises 812 residues: Collagen-like protein 5 (812 aa).

Asparagine 13 and asparagine 83 each carry an N-linked (GlcNAc...) asparagine; by host glycan. 3 consecutive Collagen-like domains span residues 69–128, 143–502, and 506–565; these read GASG…KGDD, GEKG…KGDN, and GETG…KGEA. Positions 71-568 are disordered; that stretch reads SGAQGVKGDP…PGIKGEAGTN (498 aa). Basic and acidic residues-rich tracts occupy residues 88-112, 121-435, 444-523, and 531-561; these read TKGE…EKGD, SKGD…ETGS, SKGD…KGIK, and VKGD…DPGI. Asparagine 502 carries an N-linked (GlcNAc...) asparagine; by host glycan. N-linked (GlcNAc...) asparagine; by host glycans are attached at residues asparagine 637, asparagine 658, and asparagine 667. The interval 730 to 802 is disordered; it reads GQARTNGAST…VSASGGRGGD (73 aa). Gly residues predominate over residues 752–765; it reads FGGGGGGASGFAKG.

May be hydroxylated on lysine by the viral-encoded procollagen-lysine,2-oxoglutarate 5-dioxygenase.

Its subcellular location is the virion. Functionally, may participate in the formation of a layer of cross-linked glycosylated fibrils at the viral surface thus giving it a hairy-like appearance. The polypeptide is Collagen-like protein 5 (Acanthamoeba polyphaga (Amoeba)).